Here is a 2850-residue protein sequence, read N- to C-terminus: Mucin-6 (2850 aa).

Residues 1–22 form the signal peptide; the sequence is MLRVRQLLLLLLFRGPLIDAGA. In terms of domain architecture, VWFD 1 spans 43 to 256; that stretch reads GWCSTWGAGH…KLDDPNEICA (214 aa). Disulfide bonds link Cys45-Cys218 and Cys67-Cys255. The N-linked (GlcNAc...) asparagine glycan is linked to Asn94. Positions 160-183 are disordered; that stretch reads HLTEGQGGDEVGTPGTLKQESKGS. N-linked (GlcNAc...) asparagine glycosylation occurs at Asn310. Residues 344–399 form the TIL 1 domain; it reads CPANQVYQECGEVCIKTCSNPQHSCSSPCTFGCFCPHGTLLDDISGNQSCVPVNQC. Residues 437-621 form the VWFD 2 domain; that stretch reads GHCSLEGGSF…ALEREMDPCS (185 aa). 2 cysteine pairs are disulfide-bonded: Cys439/Cys575 and Cys461/Cys620. 2 N-linked (GlcNAc...) asparagine glycosylation sites follow: Asn528 and Asn701. The region spanning 806–869 is the TIL 2 domain; sequence CPEPKTFQSC…DGQCVPAEEC (64 aa). A VWFD 3 domain is found at 908–1080; sequence STCVLYGEGH…NSWKESPLCG (173 aa). 4 disulfides stabilise this stretch: Cys910–Cys1044, Cys932–Cys1079, Cys941–Cys1041, and Cys959–Cys966. 2 N-linked (GlcNAc...) asparagine glycosylation sites follow: Asn1017 and Asn1221. Residues 1263-1281 show a composition bias toward low complexity; the sequence is EFHSSTSANTPVAPSYLPG. 16 disordered regions span residues 1263–1363, 1377–1400, 1466–1504, 1580–1600, 1626–1650, 1705–1813, 1877–1942, 1968–1992, 2049–2119, 2219–2254, 2276–2295, 2306–2338, 2370–2473, 2511–2621, 2634–2674, and 2692–2761; these read EFHS…TAEL, GMST…THRV, VSAN…PSTT, TPPV…RTTH, IASP…TSSV, TKTS…SLST, QTKS…RTTH, TSFS…PSTT, QTKS…TTNS, IAHT…SSTT, EQST…SPTD, TTPP…FRTP, PTNP…TFVS, PTIH…KSTT, and STMG…GTCS. Positions 1294-1312 are enriched in polar residues; sequence EELTVWTTPKESTVSSGEY. The segment covering 1345–1363 has biased composition (low complexity); it reads TSKPTASSLSSSTKTTAEL. Composition is skewed to polar residues over residues 1378–1399 and 1466–1484; these read MSTS…TTHR and VSAN…PVVH. 8 repeat units span residues 1440-1555, 1556-1712, 1713-1885, 1886-2054, 2055-2227, 2228-2396, 2397-2563, and 2564-2671. Residues 1440–2671 are approximate repeats; that stretch reads TQNLFSTAPH…VPTFSSFSSK (1232 aa). Over residues 1485-1504 the composition is skewed to low complexity; sequence TTSGTSSSPQTPRTTHPSTT. Residues 1626–1639 are compositionally biased toward polar residues; it reads IASPTPSAPQTSLA. Residues 1705–1719 show a composition bias toward low complexity; that stretch reads TKTSFSTDRTSTSTS. A compositionally biased stretch (polar residues) spans 1720–1757; that stretch reads APHLSETSAVTAHQSTPTAVSANSIKPTMSSTGTPVVH. A compositionally biased stretch (low complexity) spans 1758–1777; the sequence is TTSGTTSSPQTPRTTHPSTT. Residues 1778-1813 are compositionally biased toward polar residues; it reads VAVSGTVHTTGLPSGTSVHTTTNFPTHSGPQSSLST. The segment covering 1893 to 1942 has biased composition (low complexity); it reads SQPSTVTPTQSTPIPATTNSLMTTGGLTGTPPVHTTSGTTSSPQTPRTTH. The segment covering 1968–1981 has biased composition (polar residues); the sequence is IASPTPSAPQTSLA. Residues 2049–2061 are compositionally biased toward low complexity; the sequence is TSFSTDRTSTSTS. A compositionally biased stretch (polar residues) spans 2062-2099; it reads APHLSETSAVTAHQSTPTAVSANSIKPTMSSTGTPVVH. The span at 2100–2119 shows a compositional bias: low complexity; sequence TTSGTTSSPQTPRTTHPSTT. Residues 2227–2238 are compositionally biased toward polar residues; it reads DRTSTPHLSQSS. Low complexity predominate over residues 2282–2295; sequence TTHSLPTAASSSTT. Over residues 2370–2384 the composition is skewed to low complexity; it reads TTPPNTSTPVTHSTS. Residues 2385–2429 are compositionally biased toward polar residues; the sequence is ATTEAQGSFSTERTSTSYLSHPSSTTVHQSTAGPVITSIKSTMGV. Residues 2436-2456 are compositionally biased toward low complexity; it reads HTTSGTTSSPQTPHSTHPIST. Polar residues predominate over residues 2457 to 2466; that stretch reads AAISRTTGIS. Positions 2516–2533 are enriched in low complexity; that stretch reads SVSSASTSRPLSTSLPTT. Positions 2534 to 2560 are enriched in polar residues; it reads IKGTGTPQTPVSDINTTSATTQAHSSF. Positions 2561–2584 are enriched in low complexity; the sequence is PTTRTSTSHLSLPSSMTSTLTPAS. The span at 2585 to 2601 shows a compositional bias: polar residues; it reads RSASTLQYTPTPSSVSH. Positions 2639–2674 are enriched in low complexity; that stretch reads TPTPSSRPTSSTGLLSTSKTTSHVPTFSSFSSKSTT. Positions 2692 to 2725 are enriched in polar residues; that stretch reads STMGMTNLPSSGSPDINHTTRPPGSSPLPTSAFL. Residues 2726–2759 show a composition bias toward low complexity; the sequence is SRSTSPTGSSSPSTPVSSSNPDSSVSSPPSHPGT. 4 disulfide bridges follow: Cys2760-Cys2807, Cys2774-Cys2821, Cys2783-Cys2841, and Cys2787-Cys2843. Positions 2760–2849 constitute a CTCK domain; it reads CSLQEEEHQI…SCVCSPLQCK (90 aa).

Multimer; disulfide-linked. In terms of processing, O-glycosylated. As to expression, expressed in stomach, duodenum and small intestine.

Its subcellular location is the secreted. Functionally, may provide a mechanism for modulation of the composition of the protective mucus layer related to acid secretion or the presence of bacteria and noxious agents in the lumen. Plays an important role in the cytoprotection of epithelial surfaces and are used as tumor markers in a variety of cancers. May play a role in epithelial organogenesis. The chain is Mucin-6 (Muc6) from Mus musculus (Mouse).